The chain runs to 111 residues: Cytochrome c oxidase subunit 6A1, mitochondrial (111 aa).

The N-terminal 26 residues, 1–26 (MASAVLSASRVSRPLGRALPGLRRPM), are a transit peptide targeting the mitochondrion. Residues 27-36 (SSGAHGEEGS) are Mitochondrial matrix-facing. Residues 37-61 (ARMWKALTYFVALPGVGVSMLNVFL) form a helical membrane-spanning segment. Residues 62–111 (KSRHEEHERPPFVAYPHLRIRTKPFPWGDGNHTLFHNPHVNPLPTGYEDE) lie on the Mitochondrial intermembrane side of the membrane.

Belongs to the cytochrome c oxidase subunit 6A family. Component of the cytochrome c oxidase (complex IV, CIV), a multisubunit enzyme composed of 14 subunits. The complex is composed of a catalytic core of 3 subunits MT-CO1, MT-CO2 and MT-CO3, encoded in the mitochondrial DNA, and 11 supernumerary subunits COX4I, COX5A, COX5B, COX6A, COX6B, COX6C, COX7A, COX7B, COX7C, COX8 and NDUFA4, which are encoded in the nuclear genome. The complex exists as a monomer or a dimer and forms supercomplexes (SCs) in the inner mitochondrial membrane with NADH-ubiquinone oxidoreductase (complex I, CI) and ubiquinol-cytochrome c oxidoreductase (cytochrome b-c1 complex, complex III, CIII), resulting in different assemblies (supercomplex SCI(1)III(2)IV(1) and megacomplex MCI(2)III(2)IV(2)).

The protein localises to the mitochondrion inner membrane. Its pathway is energy metabolism; oxidative phosphorylation. Its function is as follows. Component of the cytochrome c oxidase, the last enzyme in the mitochondrial electron transport chain which drives oxidative phosphorylation. The respiratory chain contains 3 multisubunit complexes succinate dehydrogenase (complex II, CII), ubiquinol-cytochrome c oxidoreductase (cytochrome b-c1 complex, complex III, CIII) and cytochrome c oxidase (complex IV, CIV), that cooperate to transfer electrons derived from NADH and succinate to molecular oxygen, creating an electrochemical gradient over the inner membrane that drives transmembrane transport and the ATP synthase. Cytochrome c oxidase is the component of the respiratory chain that catalyzes the reduction of oxygen to water. Electrons originating from reduced cytochrome c in the intermembrane space (IMS) are transferred via the dinuclear copper A center (CU(A)) of subunit 2 and heme A of subunit 1 to the active site in subunit 1, a binuclear center (BNC) formed by heme A3 and copper B (CU(B)). The BNC reduces molecular oxygen to 2 water molecules unsing 4 electrons from cytochrome c in the IMS and 4 protons from the mitochondrial matrix. This is Cytochrome c oxidase subunit 6A1, mitochondrial (Cox6a1) from Mus musculus (Mouse).